The chain runs to 328 residues: Urokinase plasminogen activator surface receptor (328 aa).

The signal sequence occupies residues 1 to 24 (MGLLRRRLLLLVVVVTTCVPASQG). UPAR/Ly6 domains are found at residues 25-118 (LRCI…GRYL), 118-213 (LECA…PPNG), and 214-299 (FQCY…RPTG). Cystine bridges form between Cys-27–Cys-48, Cys-30–Cys-36, and Cys-41–Cys-69. N-linked (GlcNAc...) asparagine glycosylation occurs at Asn-76. Cystine bridges form between Cys-95–Cys-100, Cys-120–Cys-147, Cys-123–Cys-130, Cys-140–Cys-169, Cys-175–Cys-192, Cys-193–Cys-198, Cys-216–Cys-244, Cys-219–Cys-227, Cys-237–Cys-263, Cys-269–Cys-288, and Cys-289–Cys-294. Asn-184, Asn-194, Asn-222, Asn-255, Asn-283, and Asn-290 each carry an N-linked (GlcNAc...) asparagine glycan. A lipid anchor (GPI-anchor amidated glycine) is attached at Gly-299. A propeptide spans 300-328 (GAPGPGPAHLILIASLLLTLRLWGIPLWT) (removed in mature form).

In terms of assembly, monomer. Interacts (via the UPAR/Ly6 domains) with SRPX2. Interacts with MRC2. Interacts with SORL1 (via N-terminal ectodomain); this interaction decreases PLAUR internalization. The ternary complex composed of PLAUR-PLAU-SERPINE1 also interacts with SORL1. Interacts with CD82; this interaction prevents PLAUR from binding to its high affinity ligand PLAU.

It localises to the cell membrane. Its subcellular location is the secreted. In terms of biological role, acts as a receptor for urokinase plasminogen activator. Plays a role in localizing and promoting plasmin formation. Mediates the proteolysis-independent signal transduction activation effects of U-PA. The protein is Urokinase plasminogen activator surface receptor (Plaur) of Rattus norvegicus (Rat).